The chain runs to 447 residues: N-succinylarginine dihydrolase (447 aa).

Residues 19-28 (AGLSFGNEAS), asparagine 110, and 137-138 (HR) each bind substrate. Glutamate 174 is a catalytic residue. Residue arginine 212 participates in substrate binding. Histidine 248 is an active-site residue. Aspartate 250 and asparagine 359 together coordinate substrate. Cysteine 365 acts as the Nucleophile in catalysis.

Belongs to the succinylarginine dihydrolase family. As to quaternary structure, homodimer.

It catalyses the reaction N(2)-succinyl-L-arginine + 2 H2O + 2 H(+) = N(2)-succinyl-L-ornithine + 2 NH4(+) + CO2. Its pathway is amino-acid degradation; L-arginine degradation via AST pathway; L-glutamate and succinate from L-arginine: step 2/5. Catalyzes the hydrolysis of N(2)-succinylarginine into N(2)-succinylornithine, ammonia and CO(2). The polypeptide is N-succinylarginine dihydrolase (Escherichia coli O9:H4 (strain HS)).